The primary structure comprises 242 residues: Small ribosomal subunit protein uS2 (242 aa).

This sequence belongs to the universal ribosomal protein uS2 family.

The sequence is that of Small ribosomal subunit protein uS2 from Aeromonas hydrophila subsp. hydrophila (strain ATCC 7966 / DSM 30187 / BCRC 13018 / CCUG 14551 / JCM 1027 / KCTC 2358 / NCIMB 9240 / NCTC 8049).